We begin with the raw amino-acid sequence, 161 residues long: UPF0178 protein Rsph17025_3122 (161 aa).

Belongs to the UPF0178 family.

The sequence is that of UPF0178 protein Rsph17025_3122 from Cereibacter sphaeroides (strain ATCC 17025 / ATH 2.4.3) (Rhodobacter sphaeroides).